Reading from the N-terminus, the 112-residue chain is UPF0342 protein SPP_1392 (112 aa).

Belongs to the UPF0342 family.

In Streptococcus pneumoniae (strain P1031), this protein is UPF0342 protein SPP_1392.